Reading from the N-terminus, the 498-residue chain is Myotilin (498 aa).

Disordered stretches follow at residues 1–46 (MFNY…QPRQ), 64–151 (MSSS…HEIQ), and 202–241 (QDDS…NDQD). Arginine 20 is modified (omega-N-methylarginine). Low complexity predominate over residues 29 to 43 (SSFSSQTKQSSIIIQ). Over residues 77-138 (AGSNPGQRVT…INAKPSQTAN (62 aa)) the composition is skewed to polar residues. Positions 79–150 (SNPGQRVTTT…PIPRTPDHEI (72 aa)) are necessary for interaction with ACTN1. The span at 202 to 212 (QDDSGAQDSQQ) shows a compositional bias: low complexity. The interval 215-493 (SEHARLQVPT…QRLAAQSGLY (279 aa)) is necessary for interaction with FLNC. A necessary for interaction with ACTA1 region spans residues 215–498 (SEHARLQVPT…QSGLYESEEL (284 aa)). Residues 222–235 (VPTSQVRSRSTSRG) show a composition bias toward polar residues. Ig-like C2-type domains follow at residues 250–335 (PRFI…ATFT) and 349–441 (PMFI…LDVT).

The protein belongs to the myotilin/palladin family. In terms of assembly, homodimer. Interacts with ACTA1, ACTN1, FLNA, FLNB, FLNC and MYOZ2. Interacts with the C-terminal region of MYOZ1. As to expression, expressed in skeletal muscle (at protein level). Expressed in skeletal muscle, heart, bone marrow and thyroid gland.

Its subcellular location is the cell membrane. The protein resides in the sarcolemma. It is found in the cytoplasm. It localises to the cytoskeleton. The protein localises to the myofibril. Its subcellular location is the sarcomere. The protein resides in the z line. Its function is as follows. Component of a complex of multiple actin cross-linking proteins. Involved in the control of myofibril assembly and stability at the Z lines in muscle cells. The sequence is that of Myotilin (MYOT) from Homo sapiens (Human).